The chain runs to 424 residues: Arginine ADP-riboxanase OspC4 (424 aa).

NAD(+)-binding residues include His85, Gln86, Ser87, Leu91, Ile104, Asn114, Phe130, His148, Phe153, Asp173, and Glu268. Residue Glu268 is part of the active site. ANK repeat units lie at residues 311-340 (MAHQALAYSLGNKKADIALYLLSKFNFTKQ), 355-386 (NLYDVEYLLSKDGANYKVLEYFINNGLVDVNK), and 393-422 (SGDTMLDNAMKSKDSKMIDFFIKKWSGIRQ).

Belongs to the OspC family.

Its subcellular location is the secreted. The protein localises to the host cytoplasm. The catalysed reaction is L-arginyl-[protein] + NAD(+) = ADP-riboxanated L-argininyl-[protein] + nicotinamide + NH4(+) + H(+). Its function is as follows. ADP-riboxanase effector that mediates arginine ADP-riboxanation of host caspase CASP4/CASP11, thereby inhibiting pyroptosis. This is Arginine ADP-riboxanase OspC4 from Shigella flexneri.